Here is a 494-residue protein sequence, read N- to C-terminus: Ketol-acid reductoisomerase (NADP(+)) (494 aa).

Residues 14-208 (LEQLGKCRFM…GGHRAGVLQS (195 aa)) form the KARI N-terminal Rossmann domain. NADP(+) is bound by residues 45–48 (CGAQ), arginine 68, arginine 76, serine 78, and 108–110 (DKQ). Histidine 132 is a catalytic residue. Glycine 158 is a binding site for NADP(+). 2 consecutive KARI C-terminal knotted domains span residues 209–344 (SFVA…NAPA) and 345–487 (FDGA…MKDM). Mg(2+)-binding residues include aspartate 217, glutamate 221, glutamate 389, and glutamate 393. Serine 414 contacts substrate.

This sequence belongs to the ketol-acid reductoisomerase family. Mg(2+) serves as cofactor.

The catalysed reaction is (2R)-2,3-dihydroxy-3-methylbutanoate + NADP(+) = (2S)-2-acetolactate + NADPH + H(+). It catalyses the reaction (2R,3R)-2,3-dihydroxy-3-methylpentanoate + NADP(+) = (S)-2-ethyl-2-hydroxy-3-oxobutanoate + NADPH + H(+). Its pathway is amino-acid biosynthesis; L-isoleucine biosynthesis; L-isoleucine from 2-oxobutanoate: step 2/4. It functions in the pathway amino-acid biosynthesis; L-valine biosynthesis; L-valine from pyruvate: step 2/4. In terms of biological role, involved in the biosynthesis of branched-chain amino acids (BCAA). Catalyzes an alkyl-migration followed by a ketol-acid reduction of (S)-2-acetolactate (S2AL) to yield (R)-2,3-dihydroxy-isovalerate. In the isomerase reaction, S2AL is rearranged via a Mg-dependent methyl migration to produce 3-hydroxy-3-methyl-2-ketobutyrate (HMKB). In the reductase reaction, this 2-ketoacid undergoes a metal-dependent reduction by NADPH to yield (R)-2,3-dihydroxy-isovalerate. The protein is Ketol-acid reductoisomerase (NADP(+)) of Tolumonas auensis (strain DSM 9187 / NBRC 110442 / TA 4).